Reading from the N-terminus, the 364-residue chain is Uroporphyrinogen decarboxylase (364 aa).

Residues 28-32 (RQAGR), Asp-78, Tyr-160, Thr-215, and His-333 each bind substrate.

This sequence belongs to the uroporphyrinogen decarboxylase family. Homodimer.

The protein localises to the cytoplasm. The catalysed reaction is uroporphyrinogen III + 4 H(+) = coproporphyrinogen III + 4 CO2. The protein operates within porphyrin-containing compound metabolism; protoporphyrin-IX biosynthesis; coproporphyrinogen-III from 5-aminolevulinate: step 4/4. Its function is as follows. Catalyzes the decarboxylation of four acetate groups of uroporphyrinogen-III to yield coproporphyrinogen-III. The polypeptide is Uroporphyrinogen decarboxylase (Burkholderia mallei (strain NCTC 10247)).